Consider the following 500-residue polypeptide: NAD(P)H-quinone oxidoreductase chain 4, chloroplastic (500 aa).

The next 14 helical transmembrane spans lie at 4–24 (FPWL…ILFL), 37–57 (LCIC…HFQL), 84–104 (GISI…TLAA), 111–129 (SRVF…IGPF), 134–154 (LLLF…LLSM), 167–187 (FILY…GICL), 208–228 (ALEM…SPII), 242–262 (HYST…YGLV), 272–292 (AHSI…IYAA), 305–325 (IAYS…SIND), 330–350 (GAIL…FLAG), 386–406 (LALP…GILT), 416–436 (ILIT…SLSM), and 462–482 (FFVS…PDFV).

Belongs to the complex I subunit 4 family.

It localises to the plastid. The protein localises to the chloroplast thylakoid membrane. The catalysed reaction is a plastoquinone + NADH + (n+1) H(+)(in) = a plastoquinol + NAD(+) + n H(+)(out). It catalyses the reaction a plastoquinone + NADPH + (n+1) H(+)(in) = a plastoquinol + NADP(+) + n H(+)(out). The chain is NAD(P)H-quinone oxidoreductase chain 4, chloroplastic from Morus indica (Mulberry).